A 331-amino-acid chain; its full sequence is Cytosolic arginine sensor for mTORC1 subunit 1 (331 aa).

The residue at position 14 (serine 14) is a Phosphoserine. ACT domains follow at residues alanine 72–alanine 137 and glycine 259–glutamine 320. Residues serine 110–valine 111, glycine 273, isoleucine 279–valine 280, and threonine 299–aspartate 303 contribute to the L-arginine site.

It belongs to the GATS family. In terms of assembly, forms homodimers and heterodimers with CASTOR2. Interacts with the GATOR2 complex which is composed of MIOS, SEC13, SEH1L, WDR24 and WDR59; the interaction is negatively regulated by arginine. Interacts with TM4SF5; the interaction is positively regulated by leucine and is negatively regulated by arginine. Post-translationally, phosphorylation at Ser-14 by AKT1, promoting the interaction between CASTOR1 and RNF167. Ubiquitinated by RNF167 via 'Lys-29'-polyubiquitination, leading to its degradation, releasing the GATOR2 complex. Ubiquitination by RNF167 is promoted by phosphorylation at Ser-14 by AKT1.

The protein localises to the cytoplasm. Its subcellular location is the cytosol. In terms of biological role, functions as an intracellular arginine sensor within the amino acid-sensing branch of the TORC1 signaling pathway. As a homodimer or a heterodimer with CASTOR2, binds and inhibits the GATOR subcomplex GATOR2 and thereby mTORC1. Binding of arginine to CASTOR1 allosterically disrupts the interaction of CASTOR1-containing dimers with GATOR2 which can in turn activate mTORC1 and the TORC1 signaling pathway. The chain is Cytosolic arginine sensor for mTORC1 subunit 1 from Mus musculus (Mouse).